Here is an 88-residue protein sequence, read N- to C-terminus: Large ribosomal subunit protein bL27 (88 aa).

The interval Met1–Arg25 is disordered. Over residues Ala7–Gln19 the composition is skewed to polar residues.

This sequence belongs to the bacterial ribosomal protein bL27 family.

This is Large ribosomal subunit protein bL27 from Nocardia farcinica (strain IFM 10152).